The chain runs to 249 residues: 23S rRNA (guanosine-2'-O-)-methyltransferase RlmB (249 aa).

The S-adenosyl-L-methionine site is built by Gly-197, Ile-217, and Leu-226.

It belongs to the class IV-like SAM-binding methyltransferase superfamily. RNA methyltransferase TrmH family. RlmB subfamily.

Its subcellular location is the cytoplasm. The enzyme catalyses guanosine(2251) in 23S rRNA + S-adenosyl-L-methionine = 2'-O-methylguanosine(2251) in 23S rRNA + S-adenosyl-L-homocysteine + H(+). Specifically methylates the ribose of guanosine 2251 in 23S rRNA. This Ralstonia nicotianae (strain ATCC BAA-1114 / GMI1000) (Ralstonia solanacearum) protein is 23S rRNA (guanosine-2'-O-)-methyltransferase RlmB.